The following is a 237-amino-acid chain: Orotidine 5'-phosphate decarboxylase (237 aa).

Residues D17, K39, 66-75, T121, R182, Q191, G211, and R212 contribute to the substrate site; that span reads DLKLHDIGNT. K68 functions as the Proton donor in the catalytic mechanism.

Belongs to the OMP decarboxylase family. Type 1 subfamily. In terms of assembly, homodimer.

It catalyses the reaction orotidine 5'-phosphate + H(+) = UMP + CO2. Its pathway is pyrimidine metabolism; UMP biosynthesis via de novo pathway; UMP from orotate: step 2/2. Functionally, catalyzes the decarboxylation of orotidine 5'-monophosphate (OMP) to uridine 5'-monophosphate (UMP). The protein is Orotidine 5'-phosphate decarboxylase of Bradyrhizobium diazoefficiens (strain JCM 10833 / BCRC 13528 / IAM 13628 / NBRC 14792 / USDA 110).